The chain runs to 80 residues: Sulfur carrier protein TusA (80 aa).

Cysteine 17 acts as the Cysteine persulfide intermediate in catalysis.

It belongs to the sulfur carrier protein TusA family.

Its subcellular location is the cytoplasm. Functionally, sulfur carrier protein which probably makes part of a sulfur-relay system. This is Sulfur carrier protein TusA from Pseudomonas putida (strain W619).